A 436-amino-acid polypeptide reads, in one-letter code: Enolase (436 aa).

Residue Q167 participates in (2R)-2-phosphoglycerate binding. Residue E209 is the Proton donor of the active site. The Mg(2+) site is built by D246, E291, and D318. Positions 343, 372, 373, and 394 each coordinate (2R)-2-phosphoglycerate. The active-site Proton acceptor is the K343.

It belongs to the enolase family. As to quaternary structure, component of the RNA degradosome, a multiprotein complex involved in RNA processing and mRNA degradation. It depends on Mg(2+) as a cofactor.

Its subcellular location is the cytoplasm. The protein localises to the secreted. The protein resides in the cell surface. It catalyses the reaction (2R)-2-phosphoglycerate = phosphoenolpyruvate + H2O. The protein operates within carbohydrate degradation; glycolysis; pyruvate from D-glyceraldehyde 3-phosphate: step 4/5. Functionally, catalyzes the reversible conversion of 2-phosphoglycerate (2-PG) into phosphoenolpyruvate (PEP). It is essential for the degradation of carbohydrates via glycolysis. The chain is Enolase from Glaesserella parasuis serovar 5 (strain SH0165) (Haemophilus parasuis).